We begin with the raw amino-acid sequence, 82 residues long: Large ribosomal subunit protein uL23 (82 aa).

The protein belongs to the universal ribosomal protein uL23 family. In terms of assembly, part of the 50S ribosomal subunit. Contacts protein L29.

In terms of biological role, binds to 23S rRNA. One of the proteins that surrounds the polypeptide exit tunnel on the outside of the ribosome. The polypeptide is Large ribosomal subunit protein uL23 (Natronomonas pharaonis (strain ATCC 35678 / DSM 2160 / CIP 103997 / JCM 8858 / NBRC 14720 / NCIMB 2260 / Gabara) (Halobacterium pharaonis)).